The following is a 463-amino-acid chain: Cytochrome c-552 (463 aa).

Residues 1 to 23 (MNVKSIALSAVIATSFLAAGAMA) form the signal peptide. H83 contributes to the heme c binding site. Positions 111, 114, and 115 each coordinate heme. Heme c-binding residues include C149, C152, H153, C191, C194, and H195. The Ca(2+) site is built by E197, Y198, K246, and Q248. Substrate is bound at residue Y198. H249 contributes to the substrate binding site. Heme c is bound by residues H260, C267, C270, H271, H286, C299, C302, H303, and H378.

This sequence belongs to the cytochrome c-552 family. Requires Ca(2+) as cofactor. It depends on heme c as a cofactor.

The protein localises to the periplasm. The catalysed reaction is 6 Fe(III)-[cytochrome c] + NH4(+) + 2 H2O = 6 Fe(II)-[cytochrome c] + nitrite + 8 H(+). It functions in the pathway nitrogen metabolism; nitrate reduction (assimilation). In terms of biological role, catalyzes the reduction of nitrite to ammonia, consuming six electrons in the process. This Shewanella frigidimarina (strain NCIMB 400) protein is Cytochrome c-552.